A 392-amino-acid chain; its full sequence is Ameloblastin (392 aa).

The N-terminal stretch at 1-26 (MPALKIPLFKMKDMILILCLLKMSSA) is a signal peptide. Position 37 is a hydroxyproline (Pro-37). Residue Ser-43 is modified to Phosphoserine. Disordered regions lie at residues 86 to 109 (FPWMRPREHETQQPSLQPQQPGQK), 247 to 280 (TLEFDSPVAATKGPEKGEGGAQDSPVPEAHLADP), and 349 to 392 (TTLG…FQEP). Low complexity predominate over residues 97 to 109 (QQPSLQPQQPGQK). Positions 359–381 (VDSTATPDTQHTLMPRNKAQQPQ) are enriched in polar residues. A compositionally biased stretch (basic and acidic residues) spans 382-392 (IKHDAWHFQEP).

Belongs to the ameloblastin family.

The protein localises to the secreted. Its subcellular location is the extracellular space. The protein resides in the extracellular matrix. Functionally, involved in the mineralization and structural organization of enamel. This chain is Ameloblastin (AMBN), found in Bos taurus (Bovine).